The primary structure comprises 514 residues: Probable drug/proton antiporter YHK8 (514 aa).

Over Met1 to Tyr74 the chain is Cytoplasmic. The chain crosses the membrane as a helical span at residues Ile75–Leu95. Residues Pro96–Ser111 lie on the Extracellular side of the membrane. A helical transmembrane segment spans residues Thr112–Leu132. The Cytoplasmic segment spans residues Ser133–Thr141. Residues Phe142–Ile162 traverse the membrane as a helical segment. The Extracellular portion of the chain corresponds to Thr163–Phe170. A helical transmembrane segment spans residues Leu171 to Phe191. The Cytoplasmic segment spans residues Asp192–Met200. A helical transmembrane segment spans residues Ala201 to Leu221. Residues Tyr222–Lys227 lie on the Extracellular side of the membrane. A helical transmembrane segment spans residues Trp228 to Ile248. The Cytoplasmic segment spans residues Pro249–Met307. The helical transmembrane segment at Gly308–Phe328 threads the bilayer. Residues Pro329–Glu342 lie on the Extracellular side of the membrane. A helical membrane pass occupies residues Ile343–Leu363. The Cytoplasmic portion of the chain corresponds to Phe364–Glu386. The chain crosses the membrane as a helical span at residues Pro387–Tyr407. At Lys408–Trp412 the chain is on the extracellular side. A helical transmembrane segment spans residues Ile413–Val433. Residues Phe434 to Ser447 lie on the Cytoplasmic side of the membrane. Residues Gly448–Leu468 traverse the membrane as a helical segment. Residues Gln469 to Asn477 are Extracellular-facing. The helical transmembrane segment at Trp478–Thr498 threads the bilayer. Residues Lys499 to Asp514 lie on the Cytoplasmic side of the membrane.

Belongs to the major facilitator superfamily. CAR1 family.

It is found in the membrane. Its function is as follows. Probable drug/proton antiporter. This is Probable drug/proton antiporter YHK8 (YHK8) from Saccharomyces cerevisiae (strain ATCC 204508 / S288c) (Baker's yeast).